We begin with the raw amino-acid sequence, 329 residues long: DNA-directed RNA polymerase subunit alpha (329 aa).

Residues 1–233 (MVREKVKVST…NLFIPFLHVE (233 aa)) are alpha N-terminal domain (alpha-NTD). The alpha C-terminal domain (alpha-CTD) stretch occupies residues 266–329 (TKELAFQYIF…KKILDILEKK (64 aa)).

It belongs to the RNA polymerase alpha chain family. As to quaternary structure, in plastids the minimal PEP RNA polymerase catalytic core is composed of four subunits: alpha, beta, beta', and beta''. When a (nuclear-encoded) sigma factor is associated with the core the holoenzyme is formed, which can initiate transcription.

The protein resides in the plastid. Its subcellular location is the chloroplast. The catalysed reaction is RNA(n) + a ribonucleoside 5'-triphosphate = RNA(n+1) + diphosphate. In terms of biological role, DNA-dependent RNA polymerase catalyzes the transcription of DNA into RNA using the four ribonucleoside triphosphates as substrates. The sequence is that of DNA-directed RNA polymerase subunit alpha from Arabidopsis thaliana (Mouse-ear cress).